The chain runs to 597 residues: Lysine--tRNA ligase (597 aa).

Residues glutamate 501 and glutamate 508 each contribute to the Mg(2+) site.

Belongs to the class-II aminoacyl-tRNA synthetase family. As to quaternary structure, homodimer. Mg(2+) serves as cofactor.

The protein localises to the cytoplasm. The enzyme catalyses tRNA(Lys) + L-lysine + ATP = L-lysyl-tRNA(Lys) + AMP + diphosphate. This Aquifex aeolicus (strain VF5) protein is Lysine--tRNA ligase (lysS).